Reading from the N-terminus, the 110-residue chain is Transmembrane protein 233 (110 aa).

The interval 1–32 (MSQYASRSDSKGALDSSSPEAYTEDDKTEEDI) is disordered. Topologically, residues 1 to 42 (MSQYASRSDSKGALDSSSPEAYTEDDKTEEDIPAPSNYLWLT) are cytoplasmic. Residues 22–32 (YTEDDKTEEDI) show a composition bias toward acidic residues. Positions 43–63 (IISCFCPAYPVNIVALVFSIM) form an intramembrane region, helical. Residues 64-85 (SLNSYNDGDYEGARRLGRNAKW) are Cytoplasmic-facing. Residues 86-106 (VAIASIIIGLVIIGVSCAVHF) form a helical membrane-spanning segment. Topologically, residues 107–110 (SRNP) are extracellular.

It belongs to the CD225/Dispanin family. In terms of assembly, interacts with the giant stinging tree toxin ExTxA (P0DQP3). Interacts with Nav1.7/SCN9A. Interacts with Nav1.1/SCN1A, Nav1.2/SCN2A, Nav1.3/SCN3A, Nav1.4/SCN4A, Nav1.5/SCN5A, and Nav1.6/SCN8A. In terms of tissue distribution, probably expressed in nociceptive neurons. Detected in dorsal root ganglion neurons.

It localises to the membrane. Probable accessory protein of voltage-gated sodium channels. This Mus musculus (Mouse) protein is Transmembrane protein 233.